The sequence spans 317 residues: MRVIFMGTPLFAVPSLRAVAEADNDVEIVLVVTGKDKPRRSQRAEPEPTPVKKAAKELGLAVLEIDDVKDARFADTIARYRPDVIVVAAFRILPPAVYELARLGSFNLHASLLPRYRGAAPVNWTIINGDRETGVTTFFLGRKVDTGNIILQQRTPVAPEETAGELTERLADIGAGVVLKTLKRIRDGEAEPTIQDDAMATRAPKLTSETTRIDWAEPVDAICDFVRGLSPKPSAWTVFNHRKVKIYRVAPGMFQLPEQDEQQKVPGALVVDGTRMFVMALDGWVEILSLQMEGKRKMGAADFCCGFRCEEECPSFS.

111 to 114 (SLLP) lines the (6S)-5,6,7,8-tetrahydrofolate pocket.

Belongs to the Fmt family.

It catalyses the reaction L-methionyl-tRNA(fMet) + (6R)-10-formyltetrahydrofolate = N-formyl-L-methionyl-tRNA(fMet) + (6S)-5,6,7,8-tetrahydrofolate + H(+). In terms of biological role, attaches a formyl group to the free amino group of methionyl-tRNA(fMet). The formyl group appears to play a dual role in the initiator identity of N-formylmethionyl-tRNA by promoting its recognition by IF2 and preventing the misappropriation of this tRNA by the elongation apparatus. The sequence is that of Methionyl-tRNA formyltransferase from Chlorobium phaeobacteroides (strain BS1).